Here is a 461-residue protein sequence, read N- to C-terminus: MTTAKSGTTIEIIGAVVDVEFPRHAVPKVYDALQVDENNLTLEVQQQLGDGVVRTIAMGSTEGLKRDIAVKNTEKPIEVPVGKETLGRIMNVLGEPIDELGPINSKEKLPIHRPAPSFIEQSGTTELLETGIKVVDLLCPFAKGGKVGLFGGAGVGKTVNMMELIRNIAIEHSGYSVFAGVGERTREGNDFYHEMKESNVLDKVALVYGQMNEPPGNRLRVGLTGLTLAEAFRDEGRDVLLFIDNIFRYTLAGVEVSALLGRMPSAVGYQPTLAEEMGALQERITSTKKGSITSIQAVYVPADDLTDPSPATTFAHLDATVVLSRQIAERGIYPAIDPLDSTSRQLDPLIIGEEHYRVARGVQETLQRYEELKDIIAILGMDELSEDDKRAVRRARKIQRFLSQPFFVAEVFTGAPGKYVSLQDTIRGFKGIINGEYDELPEQAFYMVGSIEEAVEKAKSL.

151-158 (GGAGVGKT) contributes to the ATP binding site.

The protein belongs to the ATPase alpha/beta chains family. As to quaternary structure, F-type ATPases have 2 components, CF(1) - the catalytic core - and CF(0) - the membrane proton channel. CF(1) has five subunits: alpha(3), beta(3), gamma(1), delta(1), epsilon(1). CF(0) has three main subunits: a(1), b(2) and c(9-12). The alpha and beta chains form an alternating ring which encloses part of the gamma chain. CF(1) is attached to CF(0) by a central stalk formed by the gamma and epsilon chains, while a peripheral stalk is formed by the delta and b chains.

It localises to the cell inner membrane. The enzyme catalyses ATP + H2O + 4 H(+)(in) = ADP + phosphate + 5 H(+)(out). Functionally, produces ATP from ADP in the presence of a proton gradient across the membrane. The catalytic sites are hosted primarily by the beta subunits. This chain is ATP synthase subunit beta, found in Coxiella burnetii (strain RSA 331 / Henzerling II).